The primary structure comprises 332 residues: Glycerol-3-phosphate dehydrogenase [NAD(P)+] (332 aa).

The NADPH site is built by serine 11, phenylalanine 12, lysine 32, and lysine 106. Lysine 106, glycine 137, and serine 139 together coordinate sn-glycerol 3-phosphate. Alanine 141 contacts NADPH. The sn-glycerol 3-phosphate site is built by lysine 192, aspartate 245, serine 255, arginine 256, and asparagine 257. Lysine 192 functions as the Proton acceptor in the catalytic mechanism. Arginine 256 lines the NADPH pocket. NADPH is bound by residues valine 280 and glutamate 282.

Belongs to the NAD-dependent glycerol-3-phosphate dehydrogenase family.

It is found in the cytoplasm. It catalyses the reaction sn-glycerol 3-phosphate + NAD(+) = dihydroxyacetone phosphate + NADH + H(+). The enzyme catalyses sn-glycerol 3-phosphate + NADP(+) = dihydroxyacetone phosphate + NADPH + H(+). The protein operates within membrane lipid metabolism; glycerophospholipid metabolism. Its function is as follows. Catalyzes the reduction of the glycolytic intermediate dihydroxyacetone phosphate (DHAP) to sn-glycerol 3-phosphate (G3P), the key precursor for phospholipid synthesis. This Staphylococcus epidermidis (strain ATCC 35984 / DSM 28319 / BCRC 17069 / CCUG 31568 / BM 3577 / RP62A) protein is Glycerol-3-phosphate dehydrogenase [NAD(P)+].